The chain runs to 184 residues: Peptidyl-tRNA hydrolase (184 aa).

Residue Y14 participates in tRNA binding. The Proton acceptor role is filled by H19. Residues F64, N66, and N112 each contribute to the tRNA site.

Belongs to the PTH family. In terms of assembly, monomer.

It localises to the cytoplasm. It catalyses the reaction an N-acyl-L-alpha-aminoacyl-tRNA + H2O = an N-acyl-L-amino acid + a tRNA + H(+). In terms of biological role, hydrolyzes ribosome-free peptidyl-tRNAs (with 1 or more amino acids incorporated), which drop off the ribosome during protein synthesis, or as a result of ribosome stalling. Functionally, catalyzes the release of premature peptidyl moieties from peptidyl-tRNA molecules trapped in stalled 50S ribosomal subunits, and thus maintains levels of free tRNAs and 50S ribosomes. The protein is Peptidyl-tRNA hydrolase of Thermoanaerobacter pseudethanolicus (strain ATCC 33223 / 39E) (Clostridium thermohydrosulfuricum).